Reading from the N-terminus, the 305-residue chain is Glycine--tRNA ligase alpha subunit (305 aa).

This sequence belongs to the class-II aminoacyl-tRNA synthetase family. As to quaternary structure, tetramer of two alpha and two beta subunits.

The protein localises to the cytoplasm. It catalyses the reaction tRNA(Gly) + glycine + ATP = glycyl-tRNA(Gly) + AMP + diphosphate. The chain is Glycine--tRNA ligase alpha subunit from Vibrio campbellii (strain ATCC BAA-1116).